Consider the following 495-residue polypeptide: Cytochrome P450 710A1 (495 aa).

A helical membrane pass occupies residues 5–25; that stretch reads VSIFASLAPYLISAFLLFLLV. C434 lines the heme pocket.

This sequence belongs to the cytochrome P450 family. Requires heme as cofactor. Expressed in the vascular tissues of roots, shoots and leaves. Expressed in root tips and sepals. Very low expression in stems and siliques.

It localises to the membrane. It catalyses the reaction 5-dehydroepisterol + NADPH + O2 + H(+) = ergosta-5,7,22,24(28)-tetraen-3beta-ol + NADP(+) + 2 H2O. It participates in steroid biosynthesis; sterol biosynthesis. In terms of biological role, required to form the C-22 double bond in the sterol side chain. Possesses in vitro C-22 desaturase activity toward beta-sitosterol and produces stigmasterol. No activity with campesterol. This Arabidopsis thaliana (Mouse-ear cress) protein is Cytochrome P450 710A1.